The following is a 199-amino-acid chain: Cutinase CUT1 (199 aa).

An N-terminal signal peptide occupies residues 1-18 (MKFTTLATLALGAVSALA). Positions 19–27 (APVTELESR) are excised as a propeptide. Glutamine 28 carries the pyrrolidone carboxylic acid modification. Cysteine 31 and cysteine 105 are oxidised to a cystine. Serine 116 acts as the Nucleophile in catalysis. Cysteine 164 and cysteine 171 are disulfide-bonded. The active site involves aspartate 168. Histidine 181 serves as the catalytic Proton donor/acceptor.

Belongs to the cutinase family. Post-translationally, the 2 disulfide bonds play a critical role in holding the catalytic residues in juxta-position; reduction of the disulfide bridges results in the complete inactivation of the enzyme.

The enzyme catalyses cutin + H2O = cutin monomers.. Catalyzes the hydrolysis of complex carboxylic polyesters found in the cell wall of plants. Degrades cutin, a macromolecule that forms the structure of the plant cuticle. Also degrades suberin, a specialized macromolecule found in the cell wall of various plant tissues. In Coprinopsis cinerea (Inky cap fungus), this protein is Cutinase CUT1.